Here is a 305-residue protein sequence, read N- to C-terminus: RNA-binding protein rnp-1 (305 aa).

Residues 3–72 (SKLFVGNLPD…KVVNIKKSTS (70 aa)) form the RRM domain. The CCHC-type zinc finger occupies 84–97 (CFRCQSDEHRTPQC). The segment at 284-305 (QQIQHQQATGSPAPVPAPPRLY) is disordered. Pro residues predominate over residues 296–305 (APVPAPPRLY).

Expressed throughout the germline.

In terms of biological role, RNA-binding protein that is required for the germ line to transition from spermatogenesis to oogenesis and allow for normal oocyte development. The polypeptide is RNA-binding protein rnp-1 (Caenorhabditis elegans).